Consider the following 581-residue polypeptide: MNIENYLSETLAKVFQKLGYAESFAKVVTSTREDVGHFQCNGAMPLAKFAKKPPLAIAEEIVEHIDAEDIFAKLEVAKPGFINITLAPKFLADTTNRFLNSNKFGVQNNLPNRKVVLDFGGPNVAKPMHVGHIRSALLGDALQRIHRFCGDTVVSDVHLGDWGTQMGMLIEEIKLQSPQLVYFDENYTGEYPTESPVTVQELAEIYPRASKRCKSDINEMEKARLATFELQQGRRGYVALWQHFVRISIDAVKKDFDSLDVHFDLWLGESDANKFIDEMISYFQANNFIYEDEGAWVIDTNKDGVPPLIVIKKDGGVMYGTTDLATLWQRSKDLDPDEIIYVVDKRQSLHFKQVFSVAERTKVVSEKCKLKHVAFGTVNGKDGRPFKTREGGVMHLADLISQAKEYAKNRMPDENDDSIIDQIAMATIKFGDLINNYANDYFFDLEKFAQHEGKTGPYLLYTAVRAKSILRKIFGDNYDIKSLAKDYKVVNAHNEYEEKLQLQLIQFPIAVQRAYENSQPHHICEYAYSLANSFNKFYVNCPITNLDDESLKKARIALCMATVKAMTIASDLIGISIPERM.

A 'HIGH' region motif is present at residues 122–132 (PNVAKPMHVGH).

It belongs to the class-I aminoacyl-tRNA synthetase family. In terms of assembly, monomer.

Its subcellular location is the cytoplasm. The enzyme catalyses tRNA(Arg) + L-arginine + ATP = L-arginyl-tRNA(Arg) + AMP + diphosphate. This chain is Arginine--tRNA ligase, found in Francisella tularensis subsp. novicida (strain U112).